Here is a 301-residue protein sequence, read N- to C-terminus: Phosphatidylglycerol--prolipoprotein diacylglyceryl transferase (301 aa).

The next 4 helical transmembrane spans lie at 10–30 (IAFS…LASF), 57–77 (LLFY…MLFY), 92–112 (VWEG…AVAW), and 119–139 (LQMF…LGFG). Arginine 140 contacts a 1,2-diacyl-sn-glycero-3-phospho-(1'-sn-glycerol). Transmembrane regions (helical) follow at residues 202-222 (PSQL…LWLF), 230-250 (YAVS…VEFV), and 264-284 (LTRG…LFWL).

Belongs to the Lgt family.

It localises to the cell inner membrane. It carries out the reaction L-cysteinyl-[prolipoprotein] + a 1,2-diacyl-sn-glycero-3-phospho-(1'-sn-glycerol) = an S-1,2-diacyl-sn-glyceryl-L-cysteinyl-[prolipoprotein] + sn-glycerol 1-phosphate + H(+). The protein operates within protein modification; lipoprotein biosynthesis (diacylglyceryl transfer). Catalyzes the transfer of the diacylglyceryl group from phosphatidylglycerol to the sulfhydryl group of the N-terminal cysteine of a prolipoprotein, the first step in the formation of mature lipoproteins. The protein is Phosphatidylglycerol--prolipoprotein diacylglyceryl transferase of Xylella fastidiosa (strain 9a5c).